The primary structure comprises 818 residues: Dipeptidyl-peptidase 7 (818 aa).

The signal sequence occupies residues 1–22 (MKLKRILLSVALLCGIGTTAMA). Residues His-87, Asp-223, and Ser-645 each act as charge relay system in the active site.

Belongs to the peptidase S46 family.

In terms of biological role, catalyzes the removal of dipeptides from the N-terminus of oligopeptides. Most efficiently cleaves the synthetic substrate Met-Leu-methylcoumaryl-7-amide (Met-Leu-MCA), and slowly hydrolyzes Leu-Gln-, Lys-Ala-, Leu-Arg, and Ala-Asn-MCA. Is likely involved in amino acid metabolism and bacterial growth/survival of asaccharolytic P.endodontalis, that utilizes amino acids from extracellular proteinaceous nutrients as energy and carbon sources. In Porphyromonas endodontalis (strain ATCC 35406 / DSM 24491 / JCM 8526 / CCUG 16442 / BCRC 14492 / NCTC 13058 / HG 370) (Bacteroides endodontalis), this protein is Dipeptidyl-peptidase 7.